We begin with the raw amino-acid sequence, 234 residues long: Large ribosomal subunit protein uL1 (234 aa).

It belongs to the universal ribosomal protein uL1 family. Part of the 50S ribosomal subunit.

Its function is as follows. Binds directly to 23S rRNA. The L1 stalk is quite mobile in the ribosome, and is involved in E site tRNA release. In terms of biological role, protein L1 is also a translational repressor protein, it controls the translation of the L11 operon by binding to its mRNA. The polypeptide is Large ribosomal subunit protein uL1 (Sodalis glossinidius (strain morsitans)).